The chain runs to 68 residues: Large ribosomal subunit protein uL29 (68 aa).

This sequence belongs to the universal ribosomal protein uL29 family.

The sequence is that of Large ribosomal subunit protein uL29 from Picosynechococcus sp. (strain ATCC 27264 / PCC 7002 / PR-6) (Agmenellum quadruplicatum).